The sequence spans 358 residues: 3-isopropylmalate dehydrogenase (358 aa).

Substrate contacts are provided by R92, R102, R130, and D224. Positions 224, 248, and 252 each coordinate Mg(2+). 282 to 294 (GSAPDIAGQGIAN) provides a ligand contact to NAD(+).

This sequence belongs to the isocitrate and isopropylmalate dehydrogenases family. LeuB type 1 subfamily. As to quaternary structure, homodimer. Mg(2+) is required as a cofactor. It depends on Mn(2+) as a cofactor.

Its subcellular location is the cytoplasm. The catalysed reaction is (2R,3S)-3-isopropylmalate + NAD(+) = 4-methyl-2-oxopentanoate + CO2 + NADH. The protein operates within amino-acid biosynthesis; L-leucine biosynthesis; L-leucine from 3-methyl-2-oxobutanoate: step 3/4. Functionally, catalyzes the oxidation of 3-carboxy-2-hydroxy-4-methylpentanoate (3-isopropylmalate) to 3-carboxy-4-methyl-2-oxopentanoate. The product decarboxylates to 4-methyl-2 oxopentanoate. The polypeptide is 3-isopropylmalate dehydrogenase (Bordetella parapertussis (strain 12822 / ATCC BAA-587 / NCTC 13253)).